The primary structure comprises 532 residues: MFTDMVSKLTSLQQELLSALLDSGVTKDVLVQALEDLCPCPAEFGIKIEKPLSPSSANGGSDCGDSKPVFLTLTGAQGKGGKLSGDEGSEDGDDFDTPPILRELQSLNTEEAAEQRAEVDRMLSEDPWRVARTIKGYMQQHNIPQREVVDVTGLNQSHLSQHLNKGTPMKTAKRAALYTWYVQKQREIDRQFDRVQGSDPSDSASQDQVLFFFPEFNHGGHSSGAAGGSGAAVGDEGEPGSKRMRRNRFKWGPASQEILYQAYERQKNPSKEEREALVEECNRAECVQRGVSPSKAHGLGSNLVTEVRVYNWFANRRKEEAFRQKLAMDTYTPHMNPLLSHTASLSHHHSSESKLRYSQQAASEVTSSTTISHPSVLQQVSPGGLDHCHGLLSTDAKMISVSGGVLPPVSTLTNIHSLSQSSHHHHHHHHQQAQSLIMSLAAQSLTSPQSQSVPVINSVSGLTTLQPMQFPQSSSLTQLTTAHISQQPFAQSHMYSPKQEAGQFSHPSRYSTMDSSTITHLGSSKQCPLQAW.

A dimerization region spans residues 1 to 35; sequence MFTDMVSKLTSLQQELLSALLDSGVTKDVLVQALE. In terms of domain architecture, HNF-p1 spans 5-36; it reads MVSKLTSLQQELLSALLDSGVTKDVLVQALED. The tract at residues 74 to 95 is disordered; that stretch reads TGAQGKGGKLSGDEGSEDGDDF. One can recognise a POU-specific atypical domain in the interval 102 to 197; that stretch reads RELQSLNTEE…IDRQFDRVQG (96 aa). Residues 222–231 show a composition bias toward gly residues; sequence SSGAAGGSGA. Disordered regions lie at residues 222 to 245 and 500 to 532; these read SSGAAGGSGAAVGDEGEPGSKRMR and EAGQFSHPSRYSTMDSSTITHLGSSKQCPLQAW. A DNA-binding region (homeobox; HNF1-type) is located at residues 244-324; the sequence is MRRNRFKWGP…NRRKEEAFRQ (81 aa). The span at 505-532 shows a compositional bias: polar residues; sequence SHPSRYSTMDSSTITHLGSSKQCPLQAW.

Belongs to the HNF1 homeobox family. In terms of assembly, binds DNA as a dimer. Can form homodimer or heterodimer with HNF1-alpha. First expressed at stage 10 in the intermediate mesoderm. Expressed in rhombomere r5 by 14 hpf with expression diminishing by 18 hpf.

It localises to the nucleus. Transcription factor that binds to the inverted palindrome 5'-GTTAATNATTAAC-3'. Acts downstream of hnf1ba but is not required for induction of rhombomere r5/r6 gene expression in the hindbrain. This chain is Hepatocyte nuclear factor 1-beta-B, found in Danio rerio (Zebrafish).